The following is a 249-amino-acid chain: Probable transcriptional regulatory protein LIC_12886 (249 aa).

It belongs to the TACO1 family.

It is found in the cytoplasm. In Leptospira interrogans serogroup Icterohaemorrhagiae serovar copenhageni (strain Fiocruz L1-130), this protein is Probable transcriptional regulatory protein LIC_12886.